Here is an 816-residue protein sequence, read N- to C-terminus: H(+)/Cl(-) exchange transporter 5 (816 aa).

The Cytoplasmic segment spans residues 1–124 (MAMWQGAMDN…WALIHSVSDA (124 aa)). The next 2 membrane-spanning stretches (helical) occupy residues 125-162 (FSGWLLMLLIGLFSGSLAGLIDISAHWMTDLKEGICTG) and 208-231 (VNYFMYVLWALLFAFLAVSLVKVF). Residues 237–241 (GSGIP) carry the Selectivity filter part_1 motif. Ser-238 lines the chloride pocket. An intramembrane region (helical) is located at residues 240 to 247 (IPEIKTIL). 2 consecutive transmembrane segments (helical) span residues 256 to 275 (LGKWTLVIKTITLVLAVSSG) and 281 to 300 (EGPLVHVACCCGNILCHRFN). The short motif at 279 to 283 (GKEGP) is the Selectivity filter part_2 element. 2 consecutive intramembrane regions (helical) follow at residues 312–324 (VLSAAAAAGVSVA) and 328–336 (PIGGVLFSL). 5 consecutive transmembrane segments (helical) span residues 348 to 366 (LWRSFFAALVAAFTLRSIN), 389 to 414 (LVPFILLGIFGGLWGALFIRTNIAWC), 422 to 442 (LGKYPVIEVLIVTAITAILAF), 498 to 518 (MWQLALALILKIVITIFTFGM), and 523 to 542 (GLFIPSMAVGAIAGRLLGVG). The short motif at 523-527 (GLFIP) is the Selectivity filter part_3 element. Phe-525 contributes to the chloride binding site. Residues 570–584 (GLYAMVGAAACLGGV) constitute an intramembrane region (helical). An intramembrane region (note=Loop between two helices) is located at residues 585-587 (TRM). The helical intramembrane region spans 588–599 (TVSLVVIMFELT). The segment at residues 600–604 (GGLEY) is an intramembrane region (note=Loop between two helices). Residues 605 to 622 (IVPLMAAAMTSKWVADAL) form a helical membrane-spanning segment. Residues 623-816 (GREGIYDAHI…NQDPDSILFN (194 aa)) lie on the Cytoplasmic side of the membrane. Tyr-628 lines the chloride pocket. 2 consecutive CBS domains span residues 656 to 720 (MKPR…ARKK) and 752 to 812 (ILDL…DPDS). Residues Thr-666, 687–689 (YSG), and 794–797 (TKKD) each bind ATP.

This sequence belongs to the chloride channel (TC 2.A.49) family. ClC-5/CLCN5 subfamily. In terms of assembly, interacts with NEDD4 and NEDD4L. In terms of processing, ubiquitinated by NEDD4L in the presence of albumin; which promotes endocytosis and proteasomal degradation.

The protein localises to the golgi apparatus membrane. It localises to the endosome membrane. The protein resides in the cell membrane. It carries out the reaction 2 chloride(in) + H(+)(out) = 2 chloride(out) + H(+)(in). Proton-coupled chloride transporter. Functions as antiport system and exchanges chloride ions against protons. Important for normal acidification of the endosome lumen. May play an important role in renal tubular function. The CLC channel family contains both chloride channels and proton-coupled anion transporters that exchange chloride or another anion for protons. The absence of conserved gating glutamate residues is typical for family members that function as channels. The sequence is that of H(+)/Cl(-) exchange transporter 5 (CLCN5) from Oryctolagus cuniculus (Rabbit).